The chain runs to 141 residues: HTH-type transcriptional regulator MntR (141 aa).

An HTH dtxR-type domain is found at 1–63 (MPTPSMEDYI…YEKYRGLVLT (63 aa)). Mn(2+)-binding residues include Asp8, Glu11, His77, Glu99, Glu102, and His103.

Belongs to the DtxR/MntR family. As to quaternary structure, homodimer.

Its subcellular location is the cytoplasm. DNA binding is strongly activated by Mn(2+). In terms of biological role, central regulator of manganese homeostasis. This chain is HTH-type transcriptional regulator MntR, found in Geobacillus kaustophilus (strain HTA426).